A 192-amino-acid chain; its full sequence is Fe/S biogenesis protein NfuA (192 aa).

[4Fe-4S] cluster is bound by residues cysteine 149 and cysteine 152.

The protein belongs to the NfuA family. Homodimer. Requires [4Fe-4S] cluster as cofactor.

Its function is as follows. Involved in iron-sulfur cluster biogenesis. Binds a 4Fe-4S cluster, can transfer this cluster to apoproteins, and thereby intervenes in the maturation of Fe/S proteins. Could also act as a scaffold/chaperone for damaged Fe/S proteins. The protein is Fe/S biogenesis protein NfuA of Shewanella amazonensis (strain ATCC BAA-1098 / SB2B).